The chain runs to 200 residues: MELVVKGADALTVSETTFGRDFNEALVHQVVVAYAAGARQGTRAQKTRSDVSGGGAKPWRQKGTGRARAGTIRSPLWRTGGVTFAARPQDHSQKVNKKMYRGAMKSILSELVRQERLIVVDNFSVEAPKTKELAAKLKELDLSDVLIVTGELDENLFLAARNLYKVDVRDAATIDPVSLIAFDKIVMTAAAVKQVEEMLA.

Positions 42–65 (TRAQKTRSDVSGGGAKPWRQKGTG) are disordered.

It belongs to the universal ribosomal protein uL4 family. As to quaternary structure, part of the 50S ribosomal subunit.

Functionally, one of the primary rRNA binding proteins, this protein initially binds near the 5'-end of the 23S rRNA. It is important during the early stages of 50S assembly. It makes multiple contacts with different domains of the 23S rRNA in the assembled 50S subunit and ribosome. Forms part of the polypeptide exit tunnel. The polypeptide is Large ribosomal subunit protein uL4 (Photobacterium profundum (strain SS9)).